A 219-amino-acid polypeptide reads, in one-letter code: Multiple organellar RNA editing factor 2, chloroplastic (219 aa).

A chloroplast-targeting transit peptide spans 1–48 (MALPLSGTRHLTRALLSNVTLMAPPRIPSSVHYGGSRLGCSTRFFSIR). Residues 182–219 (VQRSPERQRRVEPQPQRAQDRPRYNDRTRYSRRRENTR) are disordered. Over residues 185–219 (SPERQRRVEPQPQRAQDRPRYNDRTRYSRRRENTR) the composition is skewed to basic and acidic residues.

This sequence belongs to the MORF family. As to quaternary structure, homodimer and heterodimer with MORF9. Interacts with protoporphyrinogen oxidase 1 PPOX1. Heterodimers with MORF8/RIP1 and MORF9/RIP9. Interacts with PCMP-A2/PMD1. Interacts with ORRM1. Interacts with ORRM6.

Its subcellular location is the plastid. The protein resides in the chloroplast. In terms of biological role, involved in plastid rRNA processing and consequently in translation and early chloroplast differentiation. Involved in organellar RNA editing. Required for the processing of multiple editing sites in plastids. The protein is Multiple organellar RNA editing factor 2, chloroplastic of Arabidopsis thaliana (Mouse-ear cress).